We begin with the raw amino-acid sequence, 361 residues long: Aminomethyltransferase (361 aa).

Belongs to the GcvT family. As to quaternary structure, the glycine cleavage system is composed of four proteins: P, T, L and H.

It carries out the reaction N(6)-[(R)-S(8)-aminomethyldihydrolipoyl]-L-lysyl-[protein] + (6S)-5,6,7,8-tetrahydrofolate = N(6)-[(R)-dihydrolipoyl]-L-lysyl-[protein] + (6R)-5,10-methylene-5,6,7,8-tetrahydrofolate + NH4(+). Its function is as follows. The glycine cleavage system catalyzes the degradation of glycine. The sequence is that of Aminomethyltransferase from Bacteroides fragilis (strain ATCC 25285 / DSM 2151 / CCUG 4856 / JCM 11019 / LMG 10263 / NCTC 9343 / Onslow / VPI 2553 / EN-2).